Consider the following 544-residue polypeptide: Chaperonin GroEL (544 aa).

ATP contacts are provided by residues 29-32 (TLGP), K50, 86-90 (DGTTT), G413, 479-481 (DAA), and D495.

This sequence belongs to the chaperonin (HSP60) family. As to quaternary structure, forms a cylinder of 14 subunits composed of two heptameric rings stacked back-to-back. Interacts with the co-chaperonin GroES.

Its subcellular location is the cytoplasm. It catalyses the reaction ATP + H2O + a folded polypeptide = ADP + phosphate + an unfolded polypeptide.. Functionally, together with its co-chaperonin GroES, plays an essential role in assisting protein folding. The GroEL-GroES system forms a nano-cage that allows encapsulation of the non-native substrate proteins and provides a physical environment optimized to promote and accelerate protein folding. This Borrelia turicatae (strain 91E135) protein is Chaperonin GroEL.